Consider the following 212-residue polypeptide: Imidazole glycerol phosphate synthase subunit HisH (212 aa).

The 210-residue stretch at 3-212 (TVAVIDYGMG…QNFAAWDGRW (210 aa)) folds into the Glutamine amidotransferase type-1 domain. The active-site Nucleophile is the C81. Active-site residues include H190 and E192.

Heterodimer of HisH and HisF.

Its subcellular location is the cytoplasm. It catalyses the reaction 5-[(5-phospho-1-deoxy-D-ribulos-1-ylimino)methylamino]-1-(5-phospho-beta-D-ribosyl)imidazole-4-carboxamide + L-glutamine = D-erythro-1-(imidazol-4-yl)glycerol 3-phosphate + 5-amino-1-(5-phospho-beta-D-ribosyl)imidazole-4-carboxamide + L-glutamate + H(+). The enzyme catalyses L-glutamine + H2O = L-glutamate + NH4(+). It functions in the pathway amino-acid biosynthesis; L-histidine biosynthesis; L-histidine from 5-phospho-alpha-D-ribose 1-diphosphate: step 5/9. Its function is as follows. IGPS catalyzes the conversion of PRFAR and glutamine to IGP, AICAR and glutamate. The HisH subunit catalyzes the hydrolysis of glutamine to glutamate and ammonia as part of the synthesis of IGP and AICAR. The resulting ammonia molecule is channeled to the active site of HisF. The chain is Imidazole glycerol phosphate synthase subunit HisH from Pseudomonas savastanoi pv. phaseolicola (strain 1448A / Race 6) (Pseudomonas syringae pv. phaseolicola (strain 1448A / Race 6)).